We begin with the raw amino-acid sequence, 279 residues long: DegV domain-containing protein SAR1438 (279 aa).

In terms of domain architecture, DegV spans 4–278 (QIIVTDSTSD…QGAIGLVVLK (275 aa)). Residues Thr-61 and Ser-93 each contribute to the hexadecanoate site.

Its function is as follows. May bind long-chain fatty acids, such as palmitate, and may play a role in lipid transport or fatty acid metabolism. This chain is DegV domain-containing protein SAR1438, found in Staphylococcus aureus (strain MRSA252).